The primary structure comprises 372 residues: MAKIVVGLSGGVDSAVSAYLLKKAGHNVIAVFMRNWDSSLNNDFLGKKNEKNFTICPQEQDWLDAKVVAKQLNIPIFRIDFIKEYWDEVFSDLILKYQSGLTPNPDILCNKNIKFKHFLDYAQKVHNADFIAMGHYAKTDNGNLYAGADSLKDQSYFLGQLSKSQLQKTIFPLGNLLKSEVRKIANELGLINAKKKDSTGICFIGERKFTDFLQNYIPAQPGNIIDISTKKVLGKHIGIMYFTIGQRKGFGLSGMKEPYFVVGHNLKEKILYVSPQSEKKWLESDSLMAKNANFLSENFRNLDNLSAKFRYRQEAIPIRIEKIQDNSFWISYQKYQAITPGQQVVIYHQNQVILAGEIALLFRNGKKLDYLD.

ATP-binding positions include 7-14 (GLSGGVDS) and M33. The interaction with target base in tRNA stretch occupies residues 104-106 (NPD). C109 (nucleophile) is an active-site residue. C109 and C202 are joined by a disulfide. Residue G134 coordinates ATP. Residues 152-154 (KDQ) are interaction with tRNA. Residue C202 is the Cysteine persulfide intermediate of the active site. The interaction with tRNA stretch occupies residues 310–311 (RY).

The protein belongs to the MnmA/TRMU family.

Its subcellular location is the cytoplasm. The catalysed reaction is S-sulfanyl-L-cysteinyl-[protein] + uridine(34) in tRNA + AH2 + ATP = 2-thiouridine(34) in tRNA + L-cysteinyl-[protein] + A + AMP + diphosphate + H(+). Its function is as follows. Catalyzes the 2-thiolation of uridine at the wobble position (U34) of tRNA, leading to the formation of s(2)U34. This is tRNA-specific 2-thiouridylase MnmA from Mesomycoplasma hyopneumoniae (strain 7448) (Mycoplasma hyopneumoniae).